We begin with the raw amino-acid sequence, 459 residues long: Argininosuccinate lyase (459 aa).

It belongs to the lyase 1 family. Argininosuccinate lyase subfamily.

The protein resides in the cytoplasm. It catalyses the reaction 2-(N(omega)-L-arginino)succinate = fumarate + L-arginine. It participates in amino-acid biosynthesis; L-arginine biosynthesis; L-arginine from L-ornithine and carbamoyl phosphate: step 3/3. This chain is Argininosuccinate lyase, found in Methylobacterium radiotolerans (strain ATCC 27329 / DSM 1819 / JCM 2831 / NBRC 15690 / NCIMB 10815 / 0-1).